We begin with the raw amino-acid sequence, 198 residues long: Holliday junction branch migration complex subunit RuvA (198 aa).

The tract at residues 1-63 (MYDYIKGQLT…EDAHLLFGFH (63 aa)) is domain I. The domain II stretch occupies residues 64-142 (TEDEKDVFLK…EAPQETGHTK (79 aa)). A flexible linker region spans residues 143-147 (ARSNK). Residues 148–198 (AGNTQLDEAIEALLALGYTATELKKIRAFFEGTSETAEQYIKSALKLLMKG) form a domain III region.

It belongs to the RuvA family. As to quaternary structure, homotetramer. Forms an RuvA(8)-RuvB(12)-Holliday junction (HJ) complex. HJ DNA is sandwiched between 2 RuvA tetramers; dsDNA enters through RuvA and exits via RuvB. An RuvB hexamer assembles on each DNA strand where it exits the tetramer. Each RuvB hexamer is contacted by two RuvA subunits (via domain III) on 2 adjacent RuvB subunits; this complex drives branch migration. In the full resolvosome a probable DNA-RuvA(4)-RuvB(12)-RuvC(2) complex forms which resolves the HJ.

Its subcellular location is the cytoplasm. The RuvA-RuvB-RuvC complex processes Holliday junction (HJ) DNA during genetic recombination and DNA repair, while the RuvA-RuvB complex plays an important role in the rescue of blocked DNA replication forks via replication fork reversal (RFR). RuvA specifically binds to HJ cruciform DNA, conferring on it an open structure. The RuvB hexamer acts as an ATP-dependent pump, pulling dsDNA into and through the RuvAB complex. HJ branch migration allows RuvC to scan DNA until it finds its consensus sequence, where it cleaves and resolves the cruciform DNA. The protein is Holliday junction branch migration complex subunit RuvA of Streptococcus pyogenes serotype M49 (strain NZ131).